A 156-amino-acid polypeptide reads, in one-letter code: Mediator of RNA polymerase II transcription subunit 28 (156 aa).

Residues 1–38 form a disordered region; sequence MDYQQKPPQSSDPSPSPPDRPPGIRSPETPSNNQNNDI. Residues 104-156 adopt a coiled-coil conformation; sequence PSRAESLKKDIAVMEEELKTKDELIKKHMRLFQESQKLVKEQIEKHRDELEKV.

Belongs to the Mediator complex subunit 28 family. As to quaternary structure, dimers. Component of the Mediator complex. Interacts with GEBPL.

The protein resides in the nucleus. Its function is as follows. Component of the Mediator complex, a coactivator involved in the regulated transcription of nearly all RNA polymerase II-dependent genes. Mediator functions as a bridge to convey information from gene-specific regulatory proteins to the basal RNA polymerase II transcription machinery. The Mediator complex, having a compact conformation in its free form, is recruited to promoters by direct interactions with regulatory proteins and serves for the assembly of a functional pre-initiation complex with RNA polymerase II and the general transcription factors. This is Mediator of RNA polymerase II transcription subunit 28 from Arabidopsis thaliana (Mouse-ear cress).